The following is a 449-amino-acid chain: Rubisco accumulation factor 1.2, chloroplastic (449 aa).

Residues 1–61 constitute a chloroplast transit peptide; sequence MFSLKSLISS…NMIPKNPPAR (61 aa). Residues 75–264 form an N-terminal alpha-helix region; sequence IPTQFRSLDS…KAKNRLNTEL (190 aa). Positions 262–288 form a coiled coil; that stretch reads TELYGDKEAEKEKEKKKKEEEVKAIRI. The tract at residues 288-434 is C-terminal beta sheet; sequence IPVVRLKFGE…GMVVLVVRPP (147 aa).

The protein belongs to the RAF family. In terms of assembly, homodimer.

Its subcellular location is the plastid. It localises to the chloroplast. Functionally, required for assembly or stability of RuBisCO. Acts at a postchaperonin step to fold and/or assemble the large subunit (rbcL) into RuBisCO. RAF1 brackets an rbcL dimer (rbcL(2)), leading to rbcL(8)-RAF1(4) complex formation. In the next step, RBCS displaces RAF1, thus resulting in holoenzyme formation. This is Rubisco accumulation factor 1.2, chloroplastic from Arabidopsis thaliana (Mouse-ear cress).